The following is a 351-amino-acid chain: Nicotinate-nucleotide--dimethylbenzimidazole phosphoribosyltransferase (351 aa).

Residue Glu-317 is the Proton acceptor of the active site.

It belongs to the CobT family.

It carries out the reaction 5,6-dimethylbenzimidazole + nicotinate beta-D-ribonucleotide = alpha-ribazole 5'-phosphate + nicotinate + H(+). Its pathway is nucleoside biosynthesis; alpha-ribazole biosynthesis; alpha-ribazole from 5,6-dimethylbenzimidazole: step 1/2. Functionally, catalyzes the synthesis of alpha-ribazole-5'-phosphate from nicotinate mononucleotide (NAMN) and 5,6-dimethylbenzimidazole (DMB). In Pseudomonas fluorescens (strain SBW25), this protein is Nicotinate-nucleotide--dimethylbenzimidazole phosphoribosyltransferase.